A 158-amino-acid polypeptide reads, in one-letter code: MVLKVYVSGMSGNKEVKKRQQRVLMILDSKNIKYDTVDITEPGKESEKELMQNKSTSNGGTVSDPEPRHPLPPQLFNDDEYCGDYDAFDMANEIDTLEVFLKLAPADTTAVSTAQIELKQENGDAKKEEAETEAEDKKTEAGDGDVDVKEEAAEKAEV.

A compositionally biased stretch (basic and acidic residues) spans Thr-40–Met-51. A disordered region spans residues Thr-40 to Gln-74. Residues Gln-52 to Thr-61 show a composition bias toward polar residues. Positions Pro-67–Pro-73 match the SH3-binding motif. Position 109 is a phosphothreonine (Thr-109). The interval Leu-118–Val-158 is disordered.

This sequence belongs to the SH3BGR family.

This Drosophila melanogaster (Fruit fly) protein is SH3 domain-binding glutamic acid-rich protein homolog (Sh3beta).